We begin with the raw amino-acid sequence, 251 residues long: Histocompatibility antigen 60b (251 aa).

The signal sequence occupies residues 1-24; sequence MAKSSLSLNWSLLVLLNFLGATLS. Topologically, residues 25-212 are extracellular; it reads TGTDSLSCEL…NSDTQGLSFT (188 aa). 4 N-linked (GlcNAc...) asparagine glycosylation sites follow: Asn-63, Asn-93, Asn-126, and Asn-189. A helical membrane pass occupies residues 213–233; it reads WIVIICIGGIVSFMAFMVFAW. Over 234-251 the chain is Cytoplasmic; that stretch reads CMLKKKKGALCCSSSSTT.

It belongs to the NKG2D ligand family. In strain C57BL/6J, strongly expressed in cardiac muscle and skeletal muscle, with lower expression levels in spleen, liver, kidney and thymus. In strain BALB/cJ, weakly expressed in cardiac muscle, spleen, kidney and thymus.

Its subcellular location is the cell membrane. Its function is as follows. Ligand for the KLRK1 immunosurveillance receptor. Binding to KLRK1 stimulates cell lysis in vitro. The protein is Histocompatibility antigen 60b of Mus musculus (Mouse).